Here is a 631-residue protein sequence, read N- to C-terminus: MSTTTLTRREQRAKAQHFIDTLEGTAFPNSKRIYVTGSQHDIRVPMREIQLSPTLISGTKDHPQYEENEAIPVYDTSGPYGDPNIAINIQQGLAKLRQPWIEARADVETLSNRSSAYTRERLTDEGLNALRFTGLLTPKRAKAGHCVTQLHYARNGIVTPEMAFIAIRENMGRERIRSEVLRHQHPGENFGARLPENITPEFVRDEVAAGRAIIPANINHPESEPMIIGRNFLVKVNANIGNSAVTSSIEEEVEKLVWATRWGADTVMDLSTGRYIHETREWILRNSPVPIGTVPIYQALEKVNGIAEDLTWEAFRDTLLEQAEQGVDYFTIHAGVLLRYVPMTAKRLTGIVSRGGSIMAKWCLSHHKENFLFEHFREICEICAAYDVSLSLGDGLRPGSIQDANDDAQFAELHTLGELTKIAWEYDVQVMIEGPGHVPMQMIRRNMTEELEHCHEAPFYTLGPLTTDIAPGYDHFTSGIGAAMIGWFGCAMLCYVTPKEHLGLPNKEDVKQGLITYKIAAHAADLAKGHPGAQIRDNAMSKARFEFRWEDQFNLALDPFTARAWHDETLPHESGKVAHFCSMCGPKFCSMKISQEVRDYAAAQTIEVGMANMSESFRAKGGEIYLKREEA.

Substrate contacts are provided by residues Asn-239, Met-268, Tyr-297, His-333, 353–355, 394–397, and Glu-433; these read SRG and DGLR. His-437 is a Zn(2+) binding site. Tyr-460 is a binding site for substrate. His-501 contacts Zn(2+). [4Fe-4S] cluster is bound by residues Cys-581, Cys-584, and Cys-589.

The protein belongs to the ThiC family. In terms of assembly, homodimer. [4Fe-4S] cluster serves as cofactor.

It catalyses the reaction 5-amino-1-(5-phospho-beta-D-ribosyl)imidazole + S-adenosyl-L-methionine = 4-amino-2-methyl-5-(phosphooxymethyl)pyrimidine + CO + 5'-deoxyadenosine + formate + L-methionine + 3 H(+). It functions in the pathway cofactor biosynthesis; thiamine diphosphate biosynthesis. Catalyzes the synthesis of the hydroxymethylpyrimidine phosphate (HMP-P) moiety of thiamine from aminoimidazole ribotide (AIR) in a radical S-adenosyl-L-methionine (SAM)-dependent reaction. This chain is Phosphomethylpyrimidine synthase, found in Salmonella arizonae (strain ATCC BAA-731 / CDC346-86 / RSK2980).